Reading from the N-terminus, the 352-residue chain is Elongation factor Ts (352 aa).

Residues 81–84 (TDFV) are involved in Mg(2+) ion dislocation from EF-Tu.

Belongs to the EF-Ts family.

It is found in the cytoplasm. In terms of biological role, associates with the EF-Tu.GDP complex and induces the exchange of GDP to GTP. It remains bound to the aminoacyl-tRNA.EF-Tu.GTP complex up to the GTP hydrolysis stage on the ribosome. This is Elongation factor Ts from Campylobacter hominis (strain ATCC BAA-381 / DSM 21671 / CCUG 45161 / LMG 19568 / NCTC 13146 / CH001A).